Reading from the N-terminus, the 56-residue chain is Defensin-1 (56 aa).

A signal peptide spans 1-24 (MKAIVVLLILALILCLYAMTTVEG). 3 disulfides stabilise this stretch: Cys26–Cys45, Cys31–Cys53, and Cys35–Cys55.

The protein resides in the secreted. Antibacterial protein involved in the immune response to septic injury. When combined with 14.026 kDa and 14.059 kDa hemolymph antimicrobial peptides, it has a strong cooperative activity against the Gram-positive bacteria B.subtilis and S.aureus, and against the Gram-negative bacteria E.coli DH5-alpha and K.pneumoniae ATCC 138833. Does not show detectable antibacterial activity when present alone. Has no hemolytic activity in human erythrocytes. The protein is Defensin-1 of Centruroides limpidus (Mexican scorpion).